Reading from the N-terminus, the 305-residue chain is Guanine nucleotide-binding protein subunit beta (305 aa).

WD repeat units follow at residues 19-49 (NKLG…LVWD), 61-91 (APSV…VVYD), 104-133 (GHAG…MFWD), 145-176 (GHEM…KLWD), 188-218 (GNTS…RCFD), 231-260 (PSSS…EVWD), and 272-302 (GHEN…RLWS).

Belongs to the WD repeat G protein beta family. In terms of assembly, g proteins are composed of 3 units, alpha, beta and gamma. Binding of the beta-gamma subunit complex (git5-git11) to the alpha subunit (gpa2) facilitates interaction with GPCR git3.

The protein resides in the cell membrane. It localises to the cytoplasm. It is found in the nucleus. In terms of biological role, beta subunit of the heterotrimeric guanine nucleotide-binding protein (G protein) involved in glucose-induced cAMP signaling. The beta-gamma subunits (git5-git11) promote binding of the alpha subunit gpa2 to GPCR git3, which senses extracellular glucose, to activate cAMP-PKA signaling and repress sexual development and gluconeogenesis. The chain is Guanine nucleotide-binding protein subunit beta (git5) from Schizosaccharomyces pombe (strain 972 / ATCC 24843) (Fission yeast).